The following is a 152-amino-acid chain: Acidic phospholipase A2 homolog textilotoxin D chain (152 aa).

Positions 1–19 are cleaved as a signal peptide; sequence MHPAHLLVLLGVCVSLLGA. Intrachain disulfides connect Cys38–Cys104, Cys54–Cys151, Cys56–Cys72, Cys71–Cys132, Cys78–Cys125, Cys88–Cys118, and Cys111–Cys123. The N-linked (GlcNAc...) asparagine glycan is linked to Asn112.

The protein belongs to the phospholipase A2 family. Group I subfamily. D49 sub-subfamily. As to quaternary structure, heterohexamer. 2 forms exist: 2 A or 2 B chains, 2 C chains and 2 covalently-linked D chains, and 1 A or 1 B, 1 C, 2 covalently-linked D chains and 2 differentially glycosylated covalently-linked D chains. Textilotoxin was originally described as pentameric. As to expression, expressed by the venom gland.

The protein localises to the secreted. Snake venom oligomeric phospholipase A2 that has potent presynaptic neurotoxicity. Chain D is not itself neurotoxic, but it is essential for the neurotoxicity of textilotoxin. Chain D possesses a very low phospholipase activity. The protein is Acidic phospholipase A2 homolog textilotoxin D chain of Pseudonaja textilis (Eastern brown snake).